We begin with the raw amino-acid sequence, 833 residues long: Leucine--tRNA ligase (833 aa).

The 'HIGH' region motif lies at 41-52 (PYPSGAGLHVGH). Residues 610–614 (KMSKS) carry the 'KMSKS' region motif. Position 613 (K613) interacts with ATP.

Belongs to the class-I aminoacyl-tRNA synthetase family.

Its subcellular location is the cytoplasm. The catalysed reaction is tRNA(Leu) + L-leucine + ATP = L-leucyl-tRNA(Leu) + AMP + diphosphate. The chain is Leucine--tRNA ligase from Streptococcus pneumoniae (strain Taiwan19F-14).